A 681-amino-acid chain; its full sequence is Sorting nexin-41 (681 aa).

Acidic residues predominate over residues 1–12; sequence MSTDNLFEDIEQ. The tract at residues 1–94 is disordered; that stretch reads MSTDNLFEDI…HNTSLNNGYP (94 aa). Residues 13–24 are compositionally biased toward polar residues; the sequence is DNNPSFYGNPSI. One can recognise a PX domain in the interval 113-236; the sequence is NDSQLQVDII…KFFDPNYELC (124 aa). 4 residues coordinate a 1,2-diacyl-sn-glycero-3-phospho-(1D-myo-inositol-3-phosphate): Arg151, Ser153, Lys177, and Arg200. Disordered regions lie at residues 475 to 505 and 558 to 597; these read LASR…TENF and TATG…QTSI. Composition is skewed to low complexity over residues 482–497 and 558–589; these read DNDS…NNND and TATG…QSQS.

The protein belongs to the sorting nexin family.

It localises to the endosome membrane. The protein localises to the endomembrane system. Its function is as follows. May be required for cytoplasm to vacuole transport (Cvt) and pexophagy. In Candida albicans (strain SC5314 / ATCC MYA-2876) (Yeast), this protein is Sorting nexin-41 (SNX41).